The sequence spans 72 residues: Translational regulator CsrA (72 aa).

It belongs to the CsrA/RsmA family. As to quaternary structure, homodimer; the beta-strands of each monomer intercalate to form a hydrophobic core, while the alpha-helices form wings that extend away from the core.

It localises to the cytoplasm. A translational regulator that binds mRNA to regulate translation initiation and/or mRNA stability. Usually binds in the 5'-UTR at or near the Shine-Dalgarno sequence preventing ribosome-binding, thus repressing translation. Its main target seems to be the major flagellin gene, while its function is anatagonized by FliW. The protein is Translational regulator CsrA of Clostridium botulinum (strain ATCC 19397 / Type A).